A 258-amino-acid chain; its full sequence is Gene 3 protein (258 aa).

Polar residues predominate over residues 163–176 (STENLLGQTQSSTH). The interval 163–258 (STENLLGQTQ…TRRYPPSFFK (96 aa)) is disordered. Residues 214–240 (SIREETVSGMARAREECNSPSEHDRLT) show a composition bias toward basic and acidic residues.

This is Gene 3 protein from Equine herpesvirus 1 (strain Kentucky A) (EHV-1).